Here is a 350-residue protein sequence, read N- to C-terminus: Ornithine carbamoyltransferase, mitochondrial (350 aa).

The N-terminal 30 residues, 1–30, are a transit peptide targeting the mitochondrion; that stretch reads MLHHMRTIINASWRYGNKCIVRQFGFSQTY. Carbamoyl phosphate contacts are provided by residues 86 to 90, arginine 137, and histidine 164; that span reads STRTR. Arginine 137 contributes to the L-ornithine binding site. Residues asparagine 195, 259-263, 298-301, and arginine 326 contribute to the L-ornithine site; these read DTWVS and HCLP. Residue cysteine 299 is part of the active site. Arginine 326 contributes to the carbamoyl phosphate binding site.

The protein belongs to the aspartate/ornithine carbamoyltransferase superfamily. OTCase family. As to quaternary structure, homotrimer. In terms of tissue distribution, liver.

It localises to the mitochondrion matrix. It carries out the reaction carbamoyl phosphate + L-ornithine = L-citrulline + phosphate + H(+). It functions in the pathway nitrogen metabolism; urea cycle; L-citrulline from L-ornithine and carbamoyl phosphate: step 1/1. Functionally, OTC is necessary for the tadpoles transition from an ammonotelic, aquatic larva to a ureotelic, terrestrial adult. The protein is Ornithine carbamoyltransferase, mitochondrial of Aquarana catesbeiana (American bullfrog).